The following is a 363-amino-acid chain: G kinase-anchoring protein 1-B (363 aa).

Disordered stretches follow at residues 17-79 (ALLK…RNLA) and 147-182 (VNGDGVNGVPQSKKVNKKDKRKNNQGKDKPLTVPLK). Residues 50-79 (KTNVNEKKKEKRRKKKEQQQSEANELRNLA) adopt a coiled-coil conformation. A compositionally biased stretch (basic residues) spans 160–170 (KVNKKDKRKNN). Coiled-coil stretches lie at residues 249-298 (DGKT…QEGE) and 328-348 (AALEQERSKVKVLQAEQVRYQ).

This sequence belongs to the GKAP1 family.

It is found in the golgi apparatus. In terms of biological role, may play a role in the regulation of insulin-dependent IRS1 tyrosine phosphorylation in adipocytes. In Xenopus laevis (African clawed frog), this protein is G kinase-anchoring protein 1-B (gkap1-b).